Here is a 343-residue protein sequence, read N- to C-terminus: Ribosomal RNA-processing protein 8 (343 aa).

Residues 1-123 (MGKKRKITDE…NDDVAAAPEE (123 aa)) form a disordered region. Residues 7–33 (ITDEKDAQHVPAEKREKVENWLKKSTE) show a composition bias toward basic and acidic residues. Composition is skewed to basic residues over residues 45 to 59 (KKKRPWRNKVRKLAA) and 89 to 101 (KKKRKRGPKKKKF). Acidic residues predominate over residues 112 to 123 (TENDDVAAAPEE). S-adenosyl-L-methionine-binding residues include His-169, Gly-204, Asp-224, Asp-236, Met-237, and Cys-253.

This sequence belongs to the methyltransferase superfamily. RRP8 family.

The protein localises to the nucleus. Its subcellular location is the nucleolus. Its function is as follows. Probable methyltransferase required to silence rDNA. Involved in regulation of antisense ribosomal siRNA production. Required for the N1-methyladenosine modification of 26S rRNAs. The polypeptide is Ribosomal RNA-processing protein 8 (rrp-8) (Caenorhabditis elegans).